The chain runs to 102 residues: Large ribosomal subunit protein uL24 (102 aa).

This sequence belongs to the universal ribosomal protein uL24 family. In terms of assembly, part of the 50S ribosomal subunit.

In terms of biological role, one of two assembly initiator proteins, it binds directly to the 5'-end of the 23S rRNA, where it nucleates assembly of the 50S subunit. Functionally, one of the proteins that surrounds the polypeptide exit tunnel on the outside of the subunit. In Ralstonia nicotianae (strain ATCC BAA-1114 / GMI1000) (Ralstonia solanacearum), this protein is Large ribosomal subunit protein uL24.